The sequence spans 626 residues: Methanol dehydrogenase [cytochrome c] subunit 1 (626 aa).

An N-terminal signal peptide occupies residues 1–27; that stretch reads MSRFVTSVSALAMLALAPAALSSGAYA. Cysteines 130 and 131 form a disulfide. Ca(2+) is bound by residues Glu-204 and Asn-288. Asp-330 acts as the Proton acceptor in catalysis. Cys-413 and Cys-442 are joined by a disulfide.

This sequence belongs to the bacterial PQQ dehydrogenase family. As to quaternary structure, heterotetramer composed of 2 alpha and 2 beta subunits. Pyrroloquinoline quinone is required as a cofactor. The cofactor is Ca(2+).

The protein localises to the cell inner membrane. It catalyses the reaction 2 Fe(III)-[cytochrome cL] + a primary alcohol = 2 Fe(II)-[cytochrome cL] + an aldehyde + 2 H(+). Its function is as follows. Catalyzes the oxidation of primary alcohols including methanol. This chain is Methanol dehydrogenase [cytochrome c] subunit 1 (moxF), found in Methylorubrum extorquens (strain ATCC 14718 / DSM 1338 / JCM 2805 / NCIMB 9133 / AM1) (Methylobacterium extorquens).